Reading from the N-terminus, the 264-residue chain is Tryptophan synthase alpha chain (264 aa).

Catalysis depends on proton acceptor residues Glu49 and Asp60.

It belongs to the TrpA family. As to quaternary structure, tetramer of two alpha and two beta chains.

The enzyme catalyses (1S,2R)-1-C-(indol-3-yl)glycerol 3-phosphate + L-serine = D-glyceraldehyde 3-phosphate + L-tryptophan + H2O. Its pathway is amino-acid biosynthesis; L-tryptophan biosynthesis; L-tryptophan from chorismate: step 5/5. Its function is as follows. The alpha subunit is responsible for the aldol cleavage of indoleglycerol phosphate to indole and glyceraldehyde 3-phosphate. In Microcystis aeruginosa (strain NIES-843 / IAM M-2473), this protein is Tryptophan synthase alpha chain.